Here is a 327-residue protein sequence, read N- to C-terminus: Opticin (327 aa).

Positions 1–19 (MKLPAFLSLLALVLLEAGT) are cleaved as a signal peptide. Sulfotyrosine occurs at positions 61 and 67. One can recognise an LRRNT domain in the interval 111–148 (VLGSPNSHGLPTCLICVCLGSSVYCDDADLENIPPLPK). LRR repeat units lie at residues 149 to 170 (TTTYLYARFNRIRRIRAGDFKG), 173 to 194 (KLKRIDLSSNSISSIDDDALRL), 197 to 218 (ALQDLILPENQLAALPALPPAI), 219 to 237 (EVLDARHNQLQSSGIQPEA), 243 to 263 (KLQFLYLADNLLDSIPGPLPP), 264 to 285 (SLRSLHLQNNLIETMQTDAFCD), and 295 to 315 (WLEDIRLDGNPINLGLFPSAY). A disulfide bond links Cys284 and Cys317.

Belongs to the small leucine-rich proteoglycan (SLRP) family. SLRP class III subfamily. In terms of assembly, homodimer. Post-translationally, O-glycosylated. In terms of processing, proteolytically cleaved by MMP1, MMP2, MMP3, MMP7, MMP8, MMP9, ADAMTS4, and ADAMTS5. Proteolytically cleaved by MMP13. Sulfated on tyrosine residues. As to expression, ocular tissues, cartilage, ligament, skin, muscle and testes.

It localises to the secreted. The protein resides in the extracellular space. Its subcellular location is the extracellular matrix. Inhibits angiogenesis in the vitreous humor of the eye, and therefore represses neovascularization. Binds collagen fibrils. May be involved in collagen fiber organization via regulation of other members of the small leucine-rich repeat proteoglycan superfamily. In Canis lupus familiaris (Dog), this protein is Opticin (OPTC).